The following is a 311-amino-acid chain: Formimidoylglutamase (311 aa).

Residues His-130, Asp-155, His-157, Asp-159, Cys-242, and Asp-244 each coordinate Mn(2+).

Belongs to the arginase family. Mn(2+) is required as a cofactor.

The enzyme catalyses N-formimidoyl-L-glutamate + H2O = formamide + L-glutamate. It functions in the pathway amino-acid degradation; L-histidine degradation into L-glutamate; L-glutamate from N-formimidoyl-L-glutamate (hydrolase route): step 1/1. Functionally, catalyzes the conversion of N-formimidoyl-L-glutamate to L-glutamate and formamide. The chain is Formimidoylglutamase from Staphylococcus haemolyticus (strain JCSC1435).